The following is a 189-amino-acid chain: Small ribosomal subunit protein uS4 (189 aa).

The S4 RNA-binding domain maps to 107–181; that stretch reads RRLQTQVFKL…VKRRTLRKGD (75 aa). The segment at 161 to 189 is disordered; it reads QSPYGGGRPGRVKRRTLRKGDGAGGDDEE.

The protein belongs to the universal ribosomal protein uS4 family. In terms of assembly, component of the small ribosomal subunit. Part of the small subunit (SSU) processome, composed of more than 70 proteins and the RNA chaperone small nucleolar RNA (snoRNA) U3.

Its subcellular location is the cytoplasm. It is found in the nucleus. The protein resides in the nucleolus. Its function is as follows. Component of the small ribosomal subunit. The ribosome is a large ribonucleoprotein complex responsible for the synthesis of proteins in the cell. Part of the small subunit (SSU) processome, first precursor of the small eukaryotic ribosomal subunit. During the assembly of the SSU processome in the nucleolus, many ribosome biogenesis factors, an RNA chaperone and ribosomal proteins associate with the nascent pre-rRNA and work in concert to generate RNA folding, modifications, rearrangements and cleavage as well as targeted degradation of pre-ribosomal RNA by the RNA exosome. This is Small ribosomal subunit protein uS4 (rps-9) from Caenorhabditis elegans.